Consider the following 389-residue polypeptide: Tryptophan synthase beta chain (389 aa).

Position 84 is an N6-(pyridoxal phosphate)lysine (Lys84).

Belongs to the TrpB family. As to quaternary structure, tetramer of two alpha and two beta chains. The cofactor is pyridoxal 5'-phosphate.

The enzyme catalyses (1S,2R)-1-C-(indol-3-yl)glycerol 3-phosphate + L-serine = D-glyceraldehyde 3-phosphate + L-tryptophan + H2O. It functions in the pathway amino-acid biosynthesis; L-tryptophan biosynthesis; L-tryptophan from chorismate: step 5/5. Functionally, the beta subunit is responsible for the synthesis of L-tryptophan from indole and L-serine. This chain is Tryptophan synthase beta chain, found in Methanococcus aeolicus (strain ATCC BAA-1280 / DSM 17508 / OCM 812 / Nankai-3).